The primary structure comprises 4194 residues: Hybrid PKS-NRPS synthetase pydA (4194 aa).

The region spanning 14–450 (REPIAVVGSG…GTNAHAIVEN (437 aa)) is the Ketosynthase family 3 (KS3) domain. Residues Cys187, His326, and His370 each act as for beta-ketoacyl synthase activity in the active site. The region spanning 565–887 (VFTGQGAQWA…QRGKDDVQAF (323 aa)) is the Malonyl-CoA:ACP transacylase (MAT) domain. The tract at residues 953–1088 (HPLLGTRTTD…GRVIVITGEA (136 aa)) is N-terminal hotdog fold. Residues 953-1257 (HPLLGTRTTD…VVSFSEPTAE (305 aa)) enclose the PKS/mFAS DH domain. The active-site Proton acceptor; for dehydratase activity is His985. A C-terminal hotdog fold region spans residues 1103–1257 (LVDIPEDRFY…VVSFSEPTAE (155 aa)). Asp1163 functions as the Proton donor; for dehydratase activity in the catalytic mechanism. Positions 1302–1596 (YMRQLASLFP…FSGVDSTTHE (295 aa)) are methyltransferase (cMeT) domain. In terms of domain architecture, Ketoreductase (KR) spans 2141–2314 (TYVFFGLTSD…AGSILHIGAV (174 aa)). In terms of domain architecture, Carrier 1 spans 2421–2505 (TTAEEALEIV…ELVEFAVENM (85 aa)). Ser2465 carries the post-translational modification O-(pantetheine 4'-phosphoryl)serine. A disordered region spans residues 2512-2583 (NMSDSLNAVP…ERDSSTASLE (72 aa)). Positions 2526–2547 (APVIPASPPSGSVSSAPSSDPP) are enriched in low complexity. Polar residues predominate over residues 2550–2565 (TAETSQHLSESSSKTS). Residues 2566 to 2577 (QPDEKQSEERDS) show a composition bias toward basic and acidic residues. The condensation stretch occupies residues 2591–3023 (EKVLPVSPGQ…QILKDVSLFT (433 aa)). Positions 3056 to 3467 (ANPPQEIALR…RIEGDTQIKL (412 aa)) are adenylation. In terms of domain architecture, Carrier 2 spans 3580 to 3660 (TQLTEAESEL…AMAAVIQDLS (81 aa)). Ser3620 carries the post-translational modification O-(pantetheine 4'-phosphoryl)serine. The region spanning 3701–3920 (ITGATGFLGK…VDLISVERAA (220 aa)) is the Thioester reductase (TE) domain. 2 disordered regions span residues 4031–4110 (RRDK…DEQI) and 4163–4194 (KGEYPCGSDGREEAEEAEWQCDEGHGDGEPDD). A compositionally biased stretch (basic and acidic residues) spans 4057 to 4072 (RGRDVSPRHPALDHPD). Positions 4174–4183 (EEAEEAEWQC) are enriched in acidic residues. Positions 4184–4194 (DEGHGDGEPDD) are enriched in basic and acidic residues.

It in the C-terminal section; belongs to the NRP synthetase family. Pantetheine 4'-phosphate serves as cofactor.

Its pathway is mycotoxin biosynthesis. In terms of biological role, hybrid PKS-NRPS synthetase; part of the gene cluster that mediates the biosynthesis of pyrrocidines, fungal natural products containing a macrocyclic para-cyclophane connected to a decahydrofluorene ring system that show potent antibiotic activities toward Gram-negative bacteria. Within the pathway, the PKS-NRPS pydA, with the help of the trans-enoyl reductase pydC, synthesize the polyketide-tyrosyl acyl thioester product which can be reductively off-loaded by the terminal reductase (R) domain in pydA. The PKS module of pydA acts in combination with the trans-acting enoyl reductase pydC to produce a methylated polyketide attached to the ACP domain. In parallel, the adenylation (A) domain of the NRPS module activated L-tyrosine, which is then transferred to the ACP domain. The condensation (C) domain subsequently link this group to the polyketide chain, forming an enzyme-bound amide. The alpha/beta hydrolase pydG is then required to catalyze the subsequent Knoevenagel condensation that affords the 3-pyrrolin-2-one ring, whereas the four proteins pydB, pydE, pydX and pydZ then function synergistically to form the cyclophane. PydB and the membrane-bound pydX and pydZ are lipid-binding proteins that can sequester and mold the pdyG product into the inverse S-shape. Binding of the medium chain reductase pydE to the complex would trigger the cascade oxidative cyclization. PydY is involved in the Diels-Alder cycloaddition that forms the decahydrofluorene core. Additional non-enzymatic hydroxylation yields pyrrocidine A2 which can be further reduced into pyrrocidine B by an endogenous reductase. This chain is Hybrid PKS-NRPS synthetase pydA, found in Acremonium sp.